A 126-amino-acid polypeptide reads, in one-letter code: Holo-[acyl-carrier-protein] synthase (126 aa).

Mg(2+)-binding residues include Asp-9 and Glu-58.

This sequence belongs to the P-Pant transferase superfamily. AcpS family. Mg(2+) serves as cofactor.

The protein localises to the cytoplasm. The enzyme catalyses apo-[ACP] + CoA = holo-[ACP] + adenosine 3',5'-bisphosphate + H(+). Functionally, transfers the 4'-phosphopantetheine moiety from coenzyme A to a Ser of acyl-carrier-protein. The protein is Holo-[acyl-carrier-protein] synthase of Salmonella choleraesuis (strain SC-B67).